We begin with the raw amino-acid sequence, 117 residues long: UPF0342 protein OB1136 (117 aa).

The protein belongs to the UPF0342 family.

The chain is UPF0342 protein OB1136 from Oceanobacillus iheyensis (strain DSM 14371 / CIP 107618 / JCM 11309 / KCTC 3954 / HTE831).